The primary structure comprises 256 residues: Probable succinate transporter subunit YjjP (256 aa).

Over 1–113 (MQTEQQRAVT…KRFSQIQPLR (113 aa)) the chain is Cytoplasmic. A helical membrane pass occupies residues 114–135 (YPRWLVALMVGLSCACFCKLNN). Residues 136–140 (GGWDG) lie on the Periplasmic side of the membrane. A helical membrane pass occupies residues 141-158 (AVITFFASTTAMYIRQLL). Topologically, residues 159–168 (AQRHLHPQIN) are cytoplasmic. A helical transmembrane segment spans residues 169–189 (FCLTAFAATTISGLLLQLPTF). The Periplasmic segment spans residues 190–194 (SNTPT). A helical transmembrane segment spans residues 195-215 (IAMAASVLLLVPGFPLINAVA). Over 216-228 (DMFKGHINTGLAR) the chain is Cytoplasmic. Residues 229 to 249 (WAIASLLTLATCVGVVMALTI) traverse the membrane as a helical segment. The Periplasmic segment spans residues 250–256 (WGLRGWV).

This sequence belongs to the ThrE exporter (TC 2.A.79) family. The transporter is composed of YjjB and YjjP.

It localises to the cell inner membrane. Functionally, involved in succinate export with YjjB. Both proteins are required for export. Contributes to succinate production under both aerobic and anaerobic conditions. The polypeptide is Probable succinate transporter subunit YjjP (yjjP) (Escherichia coli (strain K12)).